The chain runs to 633 residues: MHGLLLAAAGLLSLPLHVLAHPQPSTNLAGRGVDLDAYRMADRSSYMSSDDMKLKQPAIASLSGGNYVDTATEVVKRMMPGMTFRMVDDHYVGESGISHVYFRQTMHGMDIDNADFNVNIGKDGKVLSLGHSFYTGPAPDKAPVEKRDFSDPMQAFHGACKALNLPINADKATIQTMNEHEVMFMGTSGAMSDPQGKLCYMAKEDGTLALTWRVETDMGDNWLLSYVDAKETDKVHNVVDYVSHATYQVYKWPIPDPTEGKREIVQNPWNLKTSPFTWISDGKTNYTTTRGNNAIAQANFDGGEDYLNNYRPDSKNLKFEYPYAPNMSPPKSYIDASVTQLFYSANMVHDLYYMLGFTEKAGNFQVNNRGQGGKGNDFVILNAQDGSGTNNANFATPPDGKPGRMRVYIWTKAKPSRDSSFEAGTVIHEYTHGLSNRLCGGPANAGCLNGMESGGMGEGWGDFFATAIRLKPNDNRNSNYVHGEWVNNSPKGNRLYPYSTNLQTNPLVYTSCNKYNEVHAIGTVWCSILYEVLWNLIDKHGKNDGPTPVFENGVPNDGKYLALKLVLDGMAIQPCKPTFVQARDAIIDADMNLTKGSNKCELWKAFAKRGLGVGAKYDPKNRTGSKAVPKECQ.

The N-terminal stretch at 1-20 (MHGLLLAAAGLLSLPLHVLA) is a signal peptide. A propeptide spanning residues 21–244 (HPQPSTNLAG…VHNVVDYVSH (224 aa)) is cleaved from the precursor. N-linked (GlcNAc...) asparagine glycosylation occurs at Asn-285. His-428 contributes to the Zn(2+) binding site. The active site involves Glu-429. His-432 is a binding site for Zn(2+). Asn-592 and Asn-621 each carry an N-linked (GlcNAc...) asparagine glycan.

This sequence belongs to the peptidase M36 family. Requires Zn(2+) as cofactor.

It is found in the secreted. In terms of biological role, secreted metalloproteinase probably acting as a virulence factor. The chain is Probable extracellular metalloproteinase 5 (MEP5) from Arthroderma benhamiae (strain ATCC MYA-4681 / CBS 112371) (Trichophyton mentagrophytes).